The primary structure comprises 266 residues: Translation initiation factor 2 subunit alpha (266 aa).

Residues 12 to 83 (GEILIATVKQ…RKGTVDVSLK (72 aa)) form the S1 motif domain.

This sequence belongs to the eIF-2-alpha family. In terms of assembly, heterotrimer composed of an alpha, a beta and a gamma chain.

Functionally, eIF-2 functions in the early steps of protein synthesis by forming a ternary complex with GTP and initiator tRNA. The sequence is that of Translation initiation factor 2 subunit alpha from Saccharolobus islandicus (strain Y.N.15.51 / Yellowstone #2) (Sulfolobus islandicus).